Reading from the N-terminus, the 162-residue chain is 6,7-dimethyl-8-ribityllumazine synthase (162 aa).

Residues Phe22, 56–58, and 80–82 contribute to the 5-amino-6-(D-ribitylamino)uracil site; these read TFE and AVI. Residue 85–86 coordinates (2S)-2-hydroxy-3-oxobutyl phosphate; that stretch reads GT. His88 serves as the catalytic Proton donor. A 5-amino-6-(D-ribitylamino)uracil-binding site is contributed by Met113. Arg127 contacts (2S)-2-hydroxy-3-oxobutyl phosphate.

The protein belongs to the DMRL synthase family.

The catalysed reaction is (2S)-2-hydroxy-3-oxobutyl phosphate + 5-amino-6-(D-ribitylamino)uracil = 6,7-dimethyl-8-(1-D-ribityl)lumazine + phosphate + 2 H2O + H(+). Its pathway is cofactor biosynthesis; riboflavin biosynthesis; riboflavin from 2-hydroxy-3-oxobutyl phosphate and 5-amino-6-(D-ribitylamino)uracil: step 1/2. Functionally, catalyzes the formation of 6,7-dimethyl-8-ribityllumazine by condensation of 5-amino-6-(D-ribitylamino)uracil with 3,4-dihydroxy-2-butanone 4-phosphate. This is the penultimate step in the biosynthesis of riboflavin. This is 6,7-dimethyl-8-ribityllumazine synthase from Anaeromyxobacter dehalogenans (strain 2CP-1 / ATCC BAA-258).